The primary structure comprises 197 residues: Sodium/potassium-transporting ATPase subunit beta-1-interacting protein 3 (197 aa).

Helical transmembrane passes span 2–22, 35–55, 62–82, and 152–172; these read GCCT…VSAL, APIL…FGTI, IMVY…IICF, and VQIL…SISM.

The protein belongs to the NKAIN family. Interacts with ATP1B1.

The protein resides in the cell membrane. The polypeptide is Sodium/potassium-transporting ATPase subunit beta-1-interacting protein 3 (NKAIN3) (Homo sapiens (Human)).